Here is a 156-residue protein sequence, read N- to C-terminus: UPF0460 protein in nifX 3'region (156 aa).

It belongs to the UPF0460 family.

The chain is UPF0460 protein in nifX 3'region from Rhodobacter capsulatus (Rhodopseudomonas capsulata).